The primary structure comprises 868 residues: Metabotropic glutamate receptor 6 (868 aa).

An N-terminal signal peptide occupies residues Met-1–Ala-20. Residues Ala-21–Trp-576 lie on the Extracellular side of the membrane. Cys-48 and Cys-90 form a disulfide bridge. Residues Ser-145, Ala-166 to Thr-168, and Tyr-216 contribute to the L-glutamate site. 7 disulfides stabilise this stretch: Cys-235–Cys-527, Cys-358–Cys-374, Cys-414–Cys-421, Cys-509–Cys-528, Cys-513–Cys-531, Cys-534–Cys-546, and Cys-549–Cys-562. An N-linked (GlcNAc...) asparagine glycan is attached at Asn-287. L-glutamate is bound at residue Asp-298. Lys-391 is a binding site for L-glutamate. N-linked (GlcNAc...) asparagine glycans are attached at residues Asn-442 and Asn-470. The N-linked (GlcNAc...) asparagine glycan is linked to Asn-558. Residues Ala-577 to Val-599 traverse the membrane as a helical segment. The Cytoplasmic segment spans residues Arg-600–Glu-613. The helical transmembrane segment at Leu-614–Ala-634 threads the bilayer. Topologically, residues Glu-635 to Arg-645 are extracellular. A helical transmembrane segment spans residues Leu-646–Asn-664. At Arg-665–Gln-688 the chain is on the cytoplasmic side. Residues Leu-689–Ala-709 traverse the membrane as a helical segment. The Extracellular portion of the chain corresponds to Gln-710 to Asp-739. Residues Leu-740–Ile-761 traverse the membrane as a helical segment. The Cytoplasmic segment spans residues Lys-762–Lys-774. A helical membrane pass occupies residues Pro-775–Thr-797. Residues Ala-798–Thr-810 lie on the Extracellular side of the membrane. The helical transmembrane segment at Leu-811 to Phe-836 threads the bilayer. At His-837–Lys-868 the chain is on the cytoplasmic side. A disordered region spans residues Arg-845–Lys-868.

Belongs to the G-protein coupled receptor 3 family. In terms of assembly, homodimer. Interacts with GPR179. Interacts with photoreceptor synaptic protein LRIT1 (via its N-terminal extracellular domain).

It is found in the cell membrane. The protein localises to the endoplasmic reticulum membrane. It localises to the golgi apparatus membrane. Its subcellular location is the cell projection. The protein resides in the dendrite. Functionally, G-protein coupled receptor for glutamate. Ligand binding causes a conformation change that triggers signaling via guanine nucleotide-binding proteins (G proteins) and modulates the activity of down-stream effectors, such as adenylate cyclase. Signaling inhibits adenylate cyclase activity. Signaling stimulates TRPM1 channel activity and Ca(2+) uptake. Required for normal vision. The polypeptide is Metabotropic glutamate receptor 6 (GRM6) (Oryctolagus cuniculus (Rabbit)).